A 709-amino-acid polypeptide reads, in one-letter code: Leucine-rich repeat-containing protein 4B (709 aa).

Positions 1-38 (MAQAHIRGSPCPLLPPGRMSWPHGALLLLWLFSPPLRA) are cleaved as a signal peptide. The 39-residue stretch at 50–88 (GGGSPPATSCPAACSCSNQASRVICTRRELAEVPASIPV) folds into the LRRNT domain. LRR repeat units follow at residues 89–110 (NTRY…TFKH), 113–134 (HLEI…AFNG), 137–158 (SLNT…AFEY), 161–182 (KLRE…AFNR), 185–207 (SLRR…AFEG), 210–231 (NLRY…TALV), 232–253 (RLEE…SFQG), 256–277 (SLRK…AFDD), and 280–301 (SLEE…LFTP). Asn-226 is a glycosylation site (N-linked (GlcNAc...) asparagine). N-linked (GlcNAc...) asparagine glycosylation is found at Asn-285, Asn-335, Asn-376, Asn-402, Asn-424, Asn-427, Asn-446, and Asn-454. The LRRCT domain maps to 313–365 (NPWHCNCDVLWLSWWLKETVPSNTTCCARCHAPAGLKGRYIGELDQSHFTCYA). The Ig-like C2-type domain occupies 366–454 (PVIVEPPTDL…GNTTASATLN (89 aa)). Cys-387 and Cys-438 are joined by a disulfide. Residues 496-552 (TQPGEEAQQPRGTEKEPPGPTTDGAWGGGRPDAAAPASASTTAPAPRSSRPTEKAFT) are disordered. The span at 528–544 (AAAPASASTTAPAPRSS) shows a compositional bias: low complexity. A helical membrane pass occupies residues 575–595 (IIIGCFVAITFMAAVMLVAFY). At Ser-689 the chain carries Phosphoserine.

As to quaternary structure, interacts with PTPRF. Interacts with DLG4. In terms of processing, N-glycosylated. O-glycosylated; contains sialic acid.

It localises to the membrane. Its subcellular location is the presynaptic cell membrane. Synaptic adhesion protein. Regulates the formation of excitatory synapses. The trans-synaptic adhesion between LRRC4B and PTPRF regulates the formation of excitatory synapses in a bidirectional manner. The chain is Leucine-rich repeat-containing protein 4B (Lrrc4b) from Mus musculus (Mouse).